The primary structure comprises 966 residues: Isoleucine--tRNA ligase (966 aa).

Basic and acidic residues predominate over residues 1–16 (MSDDKRAKSDKNEKNK). The interval 1-24 (MSDDKRAKSDKNEKNKYPVNLLDT) is disordered. The 'HIGH' region signature appears at 69 to 79 (PYANGDIHIGH). Glutamate 599 lines the L-isoleucyl-5'-AMP pocket. Residues 640–644 (KMSKS) carry the 'KMSKS' region motif. Lysine 643 provides a ligand contact to ATP. Zn(2+) is bound by residues cysteine 929, cysteine 932, cysteine 949, and cysteine 952.

Belongs to the class-I aminoacyl-tRNA synthetase family. IleS type 1 subfamily. As to quaternary structure, monomer. Requires Zn(2+) as cofactor.

The protein localises to the cytoplasm. The enzyme catalyses tRNA(Ile) + L-isoleucine + ATP = L-isoleucyl-tRNA(Ile) + AMP + diphosphate. Functionally, catalyzes the attachment of isoleucine to tRNA(Ile). As IleRS can inadvertently accommodate and process structurally similar amino acids such as valine, to avoid such errors it has two additional distinct tRNA(Ile)-dependent editing activities. One activity is designated as 'pretransfer' editing and involves the hydrolysis of activated Val-AMP. The other activity is designated 'posttransfer' editing and involves deacylation of mischarged Val-tRNA(Ile). This Cupriavidus taiwanensis (strain DSM 17343 / BCRC 17206 / CCUG 44338 / CIP 107171 / LMG 19424 / R1) (Ralstonia taiwanensis (strain LMG 19424)) protein is Isoleucine--tRNA ligase.